The sequence spans 1325 residues: Sperm-specific sodium:proton exchanger (1325 aa).

The N-terminal stretch at 1-29 (MKKRVVKLRELVPAVAALAVAVLIQSATG) is a signal peptide. A disordered region spans residues 28-68 (TGSSGGSGHTPTTQATHADDHDLTTHNGTEEHDDGHDDGHD). The Extracellular segment spans residues 30-76 (SSGGSGHTPTTQATHADDHDLTTHNGTEEHDDGHDDGHDDLHAHAPK). A compositionally biased stretch (basic and acidic residues) spans 44–68 (HADDHDLTTHNGTEEHDDGHDDGHD). An a 1,2-diacylglycero-3-phosphate-binding site is contributed by His-73. A helical membrane pass occupies residues 77-96 (VIVFISGSCLFGAISRSLFK). At 97–101 (KLPIP) the chain is on the cytoplasmic side. A helical transmembrane segment spans residues 102–119 (YTVVLLILGAILGVVASN). At 120-135 (VPLVEEHTRDVAHMDP) the chain is on the extracellular side. The chain crosses the membrane as a helical span at residues 136–152 (HVLLQIFLPVLIFESAF). Topologically, residues 153–162 (AMDVHTFMRS) are cytoplasmic. A helical membrane pass occupies residues 163–188 (FSQVCILALFGLVVASVLTAVLAMNL). The segment at 163 to 250 (FSQVCILALF…AIVIFNVFMK (88 aa)) is transport core domain. Residues 189 to 194 (FNYNWN) are Extracellular-facing. A helical transmembrane segment spans residues 195–220 (FSEAMMFGAIMSATDPVAVVALLKDL). Residues 221–223 (GAS) are Cytoplasmic-facing. Residues 224–249 (KQLGTIIEGESLLNDGCAIVIFNVFM) traverse the membrane as a helical segment. Residues 237 to 238 (ND) carry the Essential for sodium:proton exchange motif. Topologically, residues 250 to 260 (KMVFFPQLTST) are extracellular. A helical membrane pass occupies residues 261–292 (VGQNVLYFLQVAVAGPLWGYAVAKVTVFFLSH). At 293 to 296 (IFND) the chain is on the cytoplasmic side. A helical transmembrane segment spans residues 297-319 (ALVEITITLAATYLTYYIGDIWL). At 320–322 (EVS) the chain is on the extracellular side. Residues 323-336 (GVLAVVVLGLIVNA) traverse the membrane as a helical segment. The Cytoplasmic portion of the chain corresponds to 337 to 343 (EKTSISP). Residues 344–377 (EVEVFLHRFWEMLAYLANTLIFMMVGVVVTQKAL) traverse the membrane as a helical segment. Residues 378-382 (VAVDK) lie on the Extracellular side of the membrane. Residues 383–412 (MDWFYLIILYLAITIIRGMVISLFSPILSR) traverse the membrane as a helical segment. The segment at 383–481 (MDWFYLIILY…TTIQTLLRIL (99 aa)) is transport core domain. Over 413–418 (IGYGLT) the chain is Cytoplasmic. Residues 419–446 (WRNAVIMTWGGLRGAVGLALALVVENLA) form a helical membrane-spanning segment. At 447 to 450 (GNDV) the chain is on the extracellular side. The helical transmembrane segment at 451 to 481 (IGSKFLFHTAGIVVLTLVINATTIQTLLRIL) threads the bilayer. The Cytoplasmic portion of the chain corresponds to 482 to 677 (GMSDISIPKR…GKLMYKICHH (196 aa)). The interval 575-620 (FADMMEEARLRMLKAEKISYWKQFEHGMLAREALRLLVQHAEVAAD) is interacts with the S4 segment of voltage sensor domain. Residues 605–620 (REALRLLVQHAEVAAD) form an interacts with the transport core domain; can lock the transporter in the inward conformation region. Residues 678–708 (MAFEVTINIAIVLNIVPIIMEFVVQDKMASV) form a helical membrane-spanning segment. At 709 to 724 (STMAAPGSTVSSEPSS) the chain is on the extracellular side. Residues 725-752 (LQKIEDALRISNYVFFVIYAIEAIVKIL) form a helical membrane-spanning segment. Residues 753–760 (GLGRHYIV) are Cytoplasmic-facing. A helical membrane pass occupies residues 761–784 (SHWNKFDAFILVVALVDIIIAETL). Topologically, residues 785–795 (LKGSITINLSS) are extracellular. The helical transmembrane segment at 796–822 (IKVVKLFRLLRGLRMLRLTKALIPKLI) threads the bilayer. An S4 segment of voltage sensor domain region spans residues 796–857 (IKVVKLFRLL…EEVGKIIDRM (62 aa)). The Cytoplasmic portion of the chain corresponds to 823–1325 (LVVNGKINNQ…EEGAAPRVNV (503 aa)). The segment at 860-919 (NKKILRELKHISETGRLQVVKELGLLQREHPGIAVSVKTRQAIRTILNHSRETIHELQGA) is interacts with the S4 segment of voltage sensor domain. A cNMP-binding domain region spans residues 968–1068 (KLIDFIKARA…CETTVQVYFI (101 aa)). 3',5'-cyclic AMP is bound at residue Gly-1043. 3',5'-cyclic GMP-binding residues include Gly-1043, Glu-1044, and Met-1045. 3',5'-cyclic AMP-binding residues include Met-1045, Gly-1046, Arg-1053, and Asn-1054. Residues Arg-1053 and Asn-1054 each coordinate 3',5'-cyclic GMP. Residues 1237–1325 (MLSRKSSGAA…EEGAAPRVNV (89 aa)) form a disordered region. Low complexity predominate over residues 1266–1280 (VSPSVPTKTTPKPKS).

Belongs to the monovalent cation:proton antiporter 1 (CPA1) transporter (TC 2.A.36) family. Homodimer; the dimerization is stabilized in the presence of phosphatidic acids.

It localises to the cell projection. The protein resides in the cilium. The protein localises to the flagellum membrane. The enzyme catalyses Na(+)(in) + H(+)(out) = Na(+)(out) + H(+)(in). Gated by voltage and stimulated by cyclic nucleotides which shift the activation voltage closer to resting membrane potential. Not inhibited by common sodium:proton exchanger inhibitors such as amiloride. Functionally, electroneutral sodium:proton antiporter that regulates intracellular pH of sperm along with capacitation and fertility. Activated in response to egg-derived chemoattractants, couples membrane voltage to sodium:proton exchange and transduces membrane hyperpolarization to cytoplasmic alkalization to cAMP signaling and ultimately to sperm motility. The chain is Sperm-specific sodium:proton exchanger from Strongylocentrotus purpuratus (Purple sea urchin).